A 138-amino-acid chain; its full sequence is Trypsin inhibitor DE5 alpha chain (138 aa).

A disulfide bridge connects residues C40 and C86.

Belongs to the protease inhibitor I3 (leguminous Kunitz-type inhibitor) family. Heterodimer of an alpha and a beta chain linked by a disulfide bond.

Inhibition of trypsin. The protein is Trypsin inhibitor DE5 alpha chain of Adenanthera pavonina (Sandal bead tree).